The following is a 302-amino-acid chain: 4-hydroxy-tetrahydrodipicolinate synthase (302 aa).

Threonine 55 serves as a coordination point for pyruvate. Tyrosine 143 acts as the Proton donor/acceptor in catalysis. Lysine 171 functions as the Schiff-base intermediate with substrate in the catalytic mechanism. Isoleucine 213 is a binding site for pyruvate.

Belongs to the DapA family. Homotetramer; dimer of dimers.

The protein localises to the cytoplasm. It carries out the reaction L-aspartate 4-semialdehyde + pyruvate = (2S,4S)-4-hydroxy-2,3,4,5-tetrahydrodipicolinate + H2O + H(+). It participates in amino-acid biosynthesis; L-lysine biosynthesis via DAP pathway; (S)-tetrahydrodipicolinate from L-aspartate: step 3/4. Functionally, catalyzes the condensation of (S)-aspartate-beta-semialdehyde [(S)-ASA] and pyruvate to 4-hydroxy-tetrahydrodipicolinate (HTPA). The sequence is that of 4-hydroxy-tetrahydrodipicolinate synthase from Psychrobacter sp. (strain PRwf-1).